The primary structure comprises 147 residues: Sec-independent protein translocase protein TatB (147 aa).

A helical transmembrane segment spans residues 1 to 21; sequence MFDIGFWELVVIGVVALVVLG. Residues 114-147 form a disordered region; the sequence is EPVAPISVATPDEEPTVIPAARAQPSAEQGEVKP.

Belongs to the TatB family. The Tat system comprises two distinct complexes: a TatABC complex, containing multiple copies of TatA, TatB and TatC subunits, and a separate TatA complex, containing only TatA subunits. Substrates initially bind to the TatABC complex, which probably triggers association of the separate TatA complex to form the active translocon.

Its subcellular location is the cell inner membrane. Part of the twin-arginine translocation (Tat) system that transports large folded proteins containing a characteristic twin-arginine motif in their signal peptide across membranes. Together with TatC, TatB is part of a receptor directly interacting with Tat signal peptides. TatB may form an oligomeric binding site that transiently accommodates folded Tat precursor proteins before their translocation. The protein is Sec-independent protein translocase protein TatB of Aeromonas hydrophila subsp. hydrophila (strain ATCC 7966 / DSM 30187 / BCRC 13018 / CCUG 14551 / JCM 1027 / KCTC 2358 / NCIMB 9240 / NCTC 8049).